The sequence spans 175 residues: NADH dehydrogenase [ubiquinone] iron-sulfur protein 4, mitochondrial (175 aa).

The transit peptide at 1–42 directs the protein to the mitochondrion; the sequence is MAAVSMSVALRQALWGRRVATVAAVSVSKVSTRSLSTSTWRL. A disordered region spans residues 149–175; it reads ERKVPKPKSKSYGANFSWNKRTRVSTK. Phosphoserine is present on S173.

The protein belongs to the complex I NDUFS4 subunit family. As to quaternary structure, mammalian complex I is composed of 45 different subunits. This is a component of the iron-sulfur (IP) fragment of the enzyme. Interacts with BCAP31 and TOMM40; the interaction mediates its translocation to the mitochondria; the interaction with BCAP31 is direct. In terms of processing, phosphorylated.

It is found in the mitochondrion inner membrane. Functionally, accessory subunit of the mitochondrial membrane respiratory chain NADH dehydrogenase (Complex I), that is believed not to be involved in catalysis. Complex I functions in the transfer of electrons from NADH to the respiratory chain. The immediate electron acceptor for the enzyme is believed to be ubiquinone. In Bos taurus (Bovine), this protein is NADH dehydrogenase [ubiquinone] iron-sulfur protein 4, mitochondrial (NDUFS4).